Reading from the N-terminus, the 406-residue chain is Cholinephosphotransferase 1 (406 aa).

The residue at position 2 (Ala2) is an N-acetylalanine. Residues 2-62 lie on the Cytoplasmic side of the membrane; the sequence is AAGAGAGSAP…LLQWIPLWMA (61 aa). The chain crosses the membrane as a helical span at residues 63 to 83; the sequence is PNSITLLGLAVNVVTTLVLIS. CDP-choline is bound at residue Asn64. The Lumenal portion of the chain corresponds to 84–93; sequence YCPTATEEAP. A helical membrane pass occupies residues 94–118; that stretch reads YWTYLLCALGLFIYQSLDAIDGKQA. 2 residues coordinate Mg(2+): Asp111 and Asp114. Position 119 (Arg119) interacts with CDP-choline. The Cytoplasmic portion of the chain corresponds to 119–125; it reads RRTNSCS. Residues 126 to 150 traverse the membrane as a helical segment; it reads PLGELFDHGCDSLSTVFMAVGASIA. Asp132 is a binding site for Mg(2+). The Proton acceptor role is filled by His133. Asp136 lines the Mg(2+) pocket. The Lumenal segment spans residues 151 to 160; the sequence is ARLGTYPDWF. Residues 161-179 form a helical membrane-spanning segment; it reads FFCSFIGMFVFYCAHWQTY. Topologically, residues 180–190 are cytoplasmic; it reads VSGMLRFGKVD. The chain crosses the membrane as a helical span at residues 191 to 207; sequence VTEIQIALVIVFVLSAF. The Lumenal segment spans residues 208–222; that stretch reads GGATMWDYTIPILEI. Residues 223–248 form a helical membrane-spanning segment; sequence KLKILPVLGFLGGVIFSCSNYFHVIL. Residues 249 to 265 are Cytoplasmic-facing; it reads HGGVGKNGSTIAGTSVL. The helical transmembrane segment at 266-281 threads the bilayer; it reads SPGLHIGLIIILAIMI. The Lumenal portion of the chain corresponds to 282 to 293; the sequence is YKKSATDVFEKH. The chain crosses the membrane as a helical span at residues 294-316; that stretch reads PCLYILMFGCVFAKVSQKLVVAH. The Cytoplasmic segment spans residues 317-329; that stretch reads MTKSELYLQDTVF. The helical transmembrane segment at 330 to 339 threads the bilayer; it reads LGPGLLFLDQ. Topologically, residues 340–346 are lumenal; that stretch reads YFNNFID. A helical membrane pass occupies residues 347 to 376; that stretch reads EYVVLWMAMVISSFDMVIYFSALCLQISRH. At 377-406 the chain is on the cytoplasmic side; that stretch reads LHLNIFKTACHQAPEQVQVLSSKSHQNNMD.

Belongs to the CDP-alcohol phosphatidyltransferase class-I family. Mg(2+) is required as a cofactor. Mn(2+) serves as cofactor. As to expression, highly expressed in testis, colon, small intestine, heart, prostate and spleen. Also detected in kidney, skeletal muscle, pancreas, leukocytes, ovary and thymus. Weakly expressed in the brain, placenta and lung. Overexpressed in cancerous breast epithelial cell lines.

The protein resides in the golgi apparatus membrane. It carries out the reaction CDP-choline + a 1,2-diacyl-sn-glycerol = a 1,2-diacyl-sn-glycero-3-phosphocholine + CMP + H(+). The enzyme catalyses 1-octadecanoyl-2-(5Z,8Z,11Z,14Z-eicosatetraenoyl)-sn-glycerol + CDP-choline = 1-octadecanoyl-2-(5Z,8Z,11Z,14Z-eicosatetraenoyl)-sn-glycero-3-phosphocholine + CMP + H(+). The catalysed reaction is 1-hexadecanoyl-2-(9Z-octadecenoyl)-sn-glycerol + CDP-choline = 1-hexadecanoyl-2-(9Z-octadecenoyl)-sn-glycero-3-phosphocholine + CMP + H(+). It catalyses the reaction 1-hexadecanoyl-2-(4Z,7Z,10Z,13Z,16Z,19Z-docosahexaenoyl)-sn-glycerol + CDP-choline = 1-hexadecanoyl-2-(4Z,7Z,10Z,13Z,16Z,19Z-docosahexaenoyl)-sn-glycero-3-phosphocholine + CMP + H(+). It carries out the reaction 1,2-dioctanoyl-sn-glycerol + CDP-choline = 1,2-dioctanoyl-sn-glycero-3-phosphocholine + CMP + H(+). It participates in phospholipid metabolism; phosphatidylcholine biosynthesis; phosphatidylcholine from phosphocholine: step 2/2. Functionally, catalyzes the final step of de novo phosphatidylcholine (PC) synthesis, i.e. the transfer of choline phosphate from CDP-choline to the free hydroxyl of a diacylglycerol (DAG), producing a PC. It thereby plays a central role in the formation and maintenance of vesicular membranes. The chain is Cholinephosphotransferase 1 from Homo sapiens (Human).